The primary structure comprises 617 residues: Dihydroxy-acid dehydratase (617 aa).

Aspartate 81 lines the Mg(2+) pocket. Cysteine 122 serves as a coordination point for [2Fe-2S] cluster. Aspartate 123 and lysine 124 together coordinate Mg(2+). Position 124 is an N6-carboxylysine (lysine 124). Cysteine 195 provides a ligand contact to [2Fe-2S] cluster. Glutamate 491 serves as a coordination point for Mg(2+). Residue serine 517 is the Proton acceptor of the active site.

It belongs to the IlvD/Edd family. In terms of assembly, homodimer. Requires [2Fe-2S] cluster as cofactor. It depends on Mg(2+) as a cofactor.

The enzyme catalyses (2R)-2,3-dihydroxy-3-methylbutanoate = 3-methyl-2-oxobutanoate + H2O. The catalysed reaction is (2R,3R)-2,3-dihydroxy-3-methylpentanoate = (S)-3-methyl-2-oxopentanoate + H2O. The protein operates within amino-acid biosynthesis; L-isoleucine biosynthesis; L-isoleucine from 2-oxobutanoate: step 3/4. It participates in amino-acid biosynthesis; L-valine biosynthesis; L-valine from pyruvate: step 3/4. Its function is as follows. Functions in the biosynthesis of branched-chain amino acids. Catalyzes the dehydration of (2R,3R)-2,3-dihydroxy-3-methylpentanoate (2,3-dihydroxy-3-methylvalerate) into 2-oxo-3-methylpentanoate (2-oxo-3-methylvalerate) and of (2R)-2,3-dihydroxy-3-methylbutanoate (2,3-dihydroxyisovalerate) into 2-oxo-3-methylbutanoate (2-oxoisovalerate), the penultimate precursor to L-isoleucine and L-valine, respectively. This Buchnera aphidicola subsp. Diuraphis noxia protein is Dihydroxy-acid dehydratase.